A 194-amino-acid chain; its full sequence is Probable GTP-binding protein EngB (194 aa).

Residues 22 to 194 form the EngB-type G domain; the sequence is DLPEYALAGR…AWQFIKEGME (173 aa). GTP contacts are provided by residues 30–37, 57–61, 75–78, 142–145, and 174–176; these read GRSNVGKS, GKTQT, DVPG, TKAD, and FSS. The Mg(2+) site is built by S37 and T59.

It belongs to the TRAFAC class TrmE-Era-EngA-EngB-Septin-like GTPase superfamily. EngB GTPase family. Mg(2+) serves as cofactor.

In terms of biological role, necessary for normal cell division and for the maintenance of normal septation. This chain is Probable GTP-binding protein EngB, found in Listeria innocua serovar 6a (strain ATCC BAA-680 / CLIP 11262).